The sequence spans 482 residues: 6-phosphogluconate dehydrogenase, decarboxylating (482 aa).

NADP(+)-binding positions include 17 to 22, 40 to 42, 82 to 84, and N110; these read GLAVMG, NRS, and VKA. Residues N110 and 136–138 contribute to the substrate site; that span reads SGG. Catalysis depends on K193, which acts as the Proton acceptor. 196-197 is a substrate binding site; the sequence is HN. E200 acts as the Proton donor in catalysis. Residues Y201, K272, R299, R457, and H463 each contribute to the substrate site.

Belongs to the 6-phosphogluconate dehydrogenase family. In terms of assembly, homodimer.

The catalysed reaction is 6-phospho-D-gluconate + NADP(+) = D-ribulose 5-phosphate + CO2 + NADPH. The protein operates within carbohydrate degradation; pentose phosphate pathway; D-ribulose 5-phosphate from D-glucose 6-phosphate (oxidative stage): step 3/3. In terms of biological role, catalyzes the oxidative decarboxylation of 6-phosphogluconate to ribulose 5-phosphate and CO(2), with concomitant reduction of NADP to NADPH. In Synechocystis sp. (strain ATCC 27184 / PCC 6803 / Kazusa), this protein is 6-phosphogluconate dehydrogenase, decarboxylating (gnd).